We begin with the raw amino-acid sequence, 499 residues long: Serine/threonine-protein phosphatase 5 (499 aa).

The disordered stretch occupies residues 1 to 24 (MAMAEGERTECAETPRDEPPADGT). Residue alanine 2 is modified to N-acetylalanine. TPR repeat units lie at residues 28–61 (AEEL…NPGN), 62–95 (AIYY…DKKY), and 96–129 (IKGY…KPND). The segment at 184–499 (GKVTITFMKD…ANTLLQLGMM (316 aa)) is catalytic. The Mn(2+) site is built by aspartate 242, histidine 244, and aspartate 271. Histidine 244 contacts substrate. Residues arginine 275 and 303–304 (NH) contribute to the substrate site. Asparagine 303 provides a ligand contact to Mn(2+). Histidine 304 acts as the Proton donor/acceptor in catalysis. Histidine 352 is a binding site for Mn(2+). Arginine 400 and histidine 427 together coordinate substrate. Histidine 427 serves as a coordination point for Mn(2+). Positions 495-499 (QLGMM) are required for autoinhibition.

This sequence belongs to the PPP phosphatase family. PP-5 (PP-T) subfamily. As to quaternary structure, probably forms a complex composed of chaperones HSP90 and HSP70, co-chaperones STIP1/HOP, CDC37, PPP5C, PTGES3/p23, TSC1 and client protein TSC2. Probably forms a complex composed of chaperones HSP90 and HSP70, co-chaperones CDC37, PPP5C, TSC1 and client protein TSC2, CDK4, AKT, RAF1 and NR3C1; this complex does not contain co-chaperones STIP1/HOP and PTGES3/p23. Part of a complex with HSP90/HSP90AA1 and steroid receptors. Interacts (via TPR repeats) with HSP90AA1 (via TPR repeat-binding motif) or HSPA1A/HSPA1B; the interaction is direct and activates the phosphatase activity. Dissociates from HSPA1A/HSPA1B and HSP90AA1 in response to arachidonic acid. Interacts with CPNE1 (via VWFA domain). Interacts with CDC16, CDC27. Interacts with KLHDC10 (via the 6 Kelch repeats); inhibits the phosphatase activity on MAP3K5. Interacts with ATM and ATR; both interactions are induced by DNA damage and enhance ATM and ATR kinase activity. Interacts with RAD17; reduced by DNA damage. Interacts with nuclear receptors such as NR3C1/GCR and PPARG (activated by agonist); regulates their transactivation activities. Interacts (via TPR repeats) with S100 proteins S100A1, S100A2, S100A6, S100B and S100P; the interactions are calcium-dependent, strongly activate PPP5C phosphatase activity and compete with HSP90AA1 and MAP3K5 interactions. Interacts with SMAD2 and SMAD3 but not with SMAD1; decreases SMAD3 phosphorylation and protein levels. Interacts (via TPR repeats) with CRY1 and CRY2; the interaction with CRY2 down-regulates the phosphatase activity on CSNK1E. Interacts (via TPR repeats) with the active form of RAC1, GNA12 or GNA13; these interactions activate the phosphatase activity and translocate PPP5C to the cell membrane. Interacts with FLCN. Mg(2+) is required as a cofactor. It depends on Mn(2+) as a cofactor. Post-translationally, activated by at least two different proteolytic cleavages producing a 56 kDa and a 50 kDa form. As to expression, expressed in liver (at protein level) and brain, enriched in suprachiasmatic nuclei.

It localises to the nucleus. It is found in the cytoplasm. Its subcellular location is the cell membrane. It carries out the reaction O-phospho-L-seryl-[protein] + H2O = L-seryl-[protein] + phosphate. The enzyme catalyses O-phospho-L-threonyl-[protein] + H2O = L-threonyl-[protein] + phosphate. With respect to regulation, autoinhibited. In the autoinhibited state, the TPR domain interacts with the catalytic region and prevents substrate access to the catalytic pocket. Allosterically activated by various polyunsaturated fatty acids, free long-chain fatty-acids and long-chain fatty acyl-CoA esters, arachidonic acid being the most effective activator. HSP90A and probably RAC1, GNA12 and GNA13 can also release the autoinhibition by the TPR repeat. Activation by RAC1, GNA12 and GNA13 is synergistic with the one produced by fatty acids binding. Inhibited by okadaic acid. Its function is as follows. Serine/threonine-protein phosphatase that dephosphorylates a myriad of proteins involved in different signaling pathways including the kinases CSNK1E, ASK1/MAP3K5, PRKDC and RAF1, the nuclear receptors NR3C1, PPARG, ESR1 and ESR2, SMAD proteins and TAU/MAPT. Implicated in wide ranging cellular processes, including apoptosis, differentiation, DNA damage response, cell survival, regulation of ion channels or circadian rhythms, in response to steroid and thyroid hormones, calcium, fatty acids, TGF-beta as well as oxidative and genotoxic stresses. Participates in the control of DNA damage response mechanisms such as checkpoint activation and DNA damage repair through, for instance, the regulation ATM/ATR-signaling and dephosphorylation of PRKDC and TP53BP1. Inhibits ASK1/MAP3K5-mediated apoptosis induced by oxidative stress. Plays a positive role in adipogenesis, mainly through the dephosphorylation and activation of PPARG transactivation function. Also dephosphorylates and inhibits the anti-adipogenic effect of NR3C1. Regulates the circadian rhythms, through the dephosphorylation and activation of CSNK1E. May modulate TGF-beta signaling pathway by the regulation of SMAD3 phosphorylation and protein expression levels. Dephosphorylates and may play a role in the regulation of TAU/MAPT. Through their dephosphorylation, may play a role in the regulation of ions channels such as KCNH2. Dephosphorylate FNIP1, disrupting interaction with HSP90AA1/Hsp90. This Mus musculus (Mouse) protein is Serine/threonine-protein phosphatase 5 (Ppp5c).